The following is a 577-amino-acid chain: Proton channel OTOP3 (577 aa).

The segment at 1 to 46 (MASQTSAPAEPAPMPSPEAKTTEGASSYDQADMETKHAGSPCPPKQ) is disordered. Topologically, residues 1–69 (MASQTSAPAE…RDRQAQKAGQ (69 aa)) are cytoplasmic. Residues 70–90 (LFSGLLALNVVFLGGAFICSM) form a helical membrane-spanning segment. The Extracellular portion of the chain corresponds to 91–100 (IFNKVSVTLG). The helical transmembrane segment at 101-124 (DVWILLAALKVLSLLWLLYYTVGT) threads the bilayer. The Cytoplasmic portion of the chain corresponds to 125–140 (TRKPHAVLYRDPHAGP). The helical transmembrane segment at 141–162 (IWVRGSLVLFGSCTVCLNIFRM) threads the bilayer. Residues 163–174 (GYDVSHIHCKSE) are Extracellular-facing. Residues 175–198 (VELIFPAIEIVFMIIQTWVLWRHC) traverse the membrane as a helical segment. Residues 199–206 (KDCVQVQT) lie on the Cytoplasmic side of the membrane. Residues 207–229 (NFTRCGLMLTLATNLLMWVLAVT) form a helical membrane-spanning segment. Residues 230–276 (NDSMHREIEAELDALMEKFSGNGTNTCMCLNTTVCEVFRKGYLMLYP) are Extracellular-facing. The helical transmembrane segment at 277–293 (FSTEYCLICCAVLFVMW) threads the bilayer. Residues 294 to 319 (KNVSRSLAAHTGAHPNRSPFRLHGTI) lie on the Cytoplasmic side of the membrane. A helical transmembrane segment spans residues 320 to 339 (FGPLLGLLALVAGVCVFVLF). Topologically, residues 340-353 (QIEASGPDIARQYF) are extracellular. A helical membrane pass occupies residues 354–376 (TLYYAFYVAVLPTMSLACLAGTA). Residues 377–394 (IHGLEERELDTLKNPTRS) lie on the Cytoplasmic side of the membrane. The helical transmembrane segment at 395-416 (LDVVLLMGAALGQMGIAYFSIV) threads the bilayer. Residues 417-427 (AIVATQPHELL) lie on the Extracellular side of the membrane. Residues 428–450 (NQLILAYSLLLILQHITQNLFII) form a helical membrane-spanning segment. Over 451–510 (EGLHRRPLWEPAVSGVMEKQDVELPRRGSLRELGQDLRRASRAYIHSFSHLNWKRRMLKE) the chain is Cytoplasmic. Residues 511-528 (ISLFLILCNITLWMMPAF) traverse the membrane as a helical segment. The Extracellular segment spans residues 529–547 (GIHPEFENGLEKDFYGYRT). The helical transmembrane segment at 548–570 (WFTIVNFGLPLGVFYRMHSVGGL) threads the bilayer. The Cytoplasmic segment spans residues 571–577 (VEVYLGA).

It belongs to the otopetrin family. As to quaternary structure, homodimer. Expressed in epidermis, small intestine, stomach and retina.

The protein localises to the cell membrane. The catalysed reaction is H(+)(in) = H(+)(out). Its activity is regulated as follows. Activated by extracellular acidification. Activated by Zn(2+) under non-acidic conditions. Proton-selective channel gated by extracellular protons. This is Proton channel OTOP3 from Mus musculus (Mouse).